The primary structure comprises 249 residues: Proteasome activator complex subunit 1 (249 aa).

The disordered stretch occupies residues 59 to 102 (APLDIPVPDPVKEKEKEERKKQQEKEEKEEKKKGDEDDKGPPCG). Residues 68 to 98 (PVKEKEKEERKKQQEKEEKEEKKKGDEDDKG) are compositionally biased toward basic and acidic residues.

Belongs to the PA28 family. As to quaternary structure, heterodimer of PSME1 and PSME2, which forms a hexameric ring. PSME1 can form homoheptamers.

Functionally, implicated in immunoproteasome assembly and required for efficient antigen processing. The PA28 activator complex enhances the generation of class I binding peptides by altering the cleavage pattern of the proteasome. The protein is Proteasome activator complex subunit 1 (Psme1) of Mus musculus (Mouse).